Consider the following 170-residue polypeptide: Large ribosomal subunit protein bL17 (170 aa).

The segment covering A134 to K144 has biased composition (low complexity). Residues A134 to H170 are disordered.

The protein belongs to the bacterial ribosomal protein bL17 family. Part of the 50S ribosomal subunit. Contacts protein L32.

The chain is Large ribosomal subunit protein bL17 from Mycobacterium leprae (strain Br4923).